Consider the following 379-residue polypeptide: Alkanesulfonate monooxygenase (379 aa).

This sequence belongs to the SsuD family.

The enzyme catalyses an alkanesulfonate + FMNH2 + O2 = an aldehyde + FMN + sulfite + H2O + 2 H(+). Its function is as follows. Catalyzes the desulfonation of aliphatic sulfonates. The chain is Alkanesulfonate monooxygenase from Pseudomonas savastanoi pv. phaseolicola (strain 1448A / Race 6) (Pseudomonas syringae pv. phaseolicola (strain 1448A / Race 6)).